The primary structure comprises 169 residues: Large ribosomal subunit protein uL23 (169 aa).

The segment at 1–20 is disordered; sequence MAGKKVKSNTPKQDLSVSKS. A compositionally biased stretch (polar residues) spans 8 to 20; the sequence is SNTPKQDLSVSKS.

It belongs to the universal ribosomal protein uL23 family.

Its function is as follows. This protein binds to a specific region on the 26S rRNA. This is Large ribosomal subunit protein uL23 (rpl23a) from Dictyostelium discoideum (Social amoeba).